The primary structure comprises 480 residues: tRNA-2-methylthio-N(6)-dimethylallyladenosine synthase (480 aa).

Positions 32–149 constitute an MTTase N-terminal domain; sequence RKLYIRTFGC…LPELIRRRRA (118 aa). 6 residues coordinate [4Fe-4S] cluster: Cys41, Cys78, Cys112, Cys186, Cys190, and Cys193. The Radical SAM core domain occupies 172–405; that stretch reads RIEGATAFVS…QALINAQAAA (234 aa). Residues 408–471 enclose the TRAM domain; it reads QAMVGTRQRL…PNSLRARVAD (64 aa).

Belongs to the methylthiotransferase family. MiaB subfamily. In terms of assembly, monomer. [4Fe-4S] cluster serves as cofactor.

Its subcellular location is the cytoplasm. The enzyme catalyses N(6)-dimethylallyladenosine(37) in tRNA + (sulfur carrier)-SH + AH2 + 2 S-adenosyl-L-methionine = 2-methylsulfanyl-N(6)-dimethylallyladenosine(37) in tRNA + (sulfur carrier)-H + 5'-deoxyadenosine + L-methionine + A + S-adenosyl-L-homocysteine + 2 H(+). In terms of biological role, catalyzes the methylthiolation of N6-(dimethylallyl)adenosine (i(6)A), leading to the formation of 2-methylthio-N6-(dimethylallyl)adenosine (ms(2)i(6)A) at position 37 in tRNAs that read codons beginning with uridine. This Bordetella petrii (strain ATCC BAA-461 / DSM 12804 / CCUG 43448) protein is tRNA-2-methylthio-N(6)-dimethylallyladenosine synthase.